Here is a 1023-residue protein sequence, read N- to C-terminus: Lon protease homolog (1023 aa).

Position 515–522 (515–522 (GPPGVGKT)) interacts with ATP. In terms of domain architecture, Lon proteolytic spans 810-1003 (TNMIGVINGL…IEIITDPNVI (194 aa)). Serine 906 is an active-site residue.

It belongs to the peptidase S16 family.

The protein is Lon protease homolog of Acanthamoeba polyphaga (Amoeba).